Reading from the N-terminus, the 236-residue chain is Small ribosomal subunit protein uS2c (236 aa).

It belongs to the universal ribosomal protein uS2 family.

The protein localises to the plastid. It is found in the chloroplast. In Calycanthus floridus var. glaucus (Eastern sweetshrub), this protein is Small ribosomal subunit protein uS2c (rps2).